Consider the following 116-residue polypeptide: Large ribosomal subunit protein bL20 (116 aa).

The protein belongs to the bacterial ribosomal protein bL20 family.

In terms of biological role, binds directly to 23S ribosomal RNA and is necessary for the in vitro assembly process of the 50S ribosomal subunit. It is not involved in the protein synthesizing functions of that subunit. The protein is Large ribosomal subunit protein bL20 of Acaryochloris marina (strain MBIC 11017).